The primary structure comprises 304 residues: Methionyl-tRNA formyltransferase (304 aa).

Residue 107–110 participates in (6S)-5,6,7,8-tetrahydrofolate binding; that stretch reads SLLP.

It belongs to the Fmt family.

The enzyme catalyses L-methionyl-tRNA(fMet) + (6R)-10-formyltetrahydrofolate = N-formyl-L-methionyl-tRNA(fMet) + (6S)-5,6,7,8-tetrahydrofolate + H(+). In terms of biological role, attaches a formyl group to the free amino group of methionyl-tRNA(fMet). The formyl group appears to play a dual role in the initiator identity of N-formylmethionyl-tRNA by promoting its recognition by IF2 and preventing the misappropriation of this tRNA by the elongation apparatus. The chain is Methionyl-tRNA formyltransferase from Coprothermobacter proteolyticus (strain ATCC 35245 / DSM 5265 / OCM 4 / BT).